Consider the following 514-residue polypeptide: Membrane-bound lytic murein transglycosylase F (514 aa).

A signal peptide spans 1–30; that stretch reads MKKLKINYLFIGILTLLLAAALWPSIPWFG. A non-LT domain region spans residues 31-269; sequence KTENHVAAIQ…RIEEKYLGHG (239 aa). Residues 270 to 514 form an LT domain region; that stretch reads DDFDYVDTRS…LFTPQKKEEK (245 aa). Glu314 is a catalytic residue.

This sequence in the N-terminal section; belongs to the bacterial solute-binding protein 3 family. The protein in the C-terminal section; belongs to the transglycosylase Slt family.

Its subcellular location is the cell outer membrane. The enzyme catalyses Exolytic cleavage of the (1-&gt;4)-beta-glycosidic linkage between N-acetylmuramic acid (MurNAc) and N-acetylglucosamine (GlcNAc) residues in peptidoglycan, from either the reducing or the non-reducing ends of the peptidoglycan chains, with concomitant formation of a 1,6-anhydrobond in the MurNAc residue.. In terms of biological role, murein-degrading enzyme that degrades murein glycan strands and insoluble, high-molecular weight murein sacculi, with the concomitant formation of a 1,6-anhydromuramoyl product. Lytic transglycosylases (LTs) play an integral role in the metabolism of the peptidoglycan (PG) sacculus. Their lytic action creates space within the PG sacculus to allow for its expansion as well as for the insertion of various structures such as secretion systems and flagella. This Salmonella arizonae (strain ATCC BAA-731 / CDC346-86 / RSK2980) protein is Membrane-bound lytic murein transglycosylase F.